Here is a 440-residue protein sequence, read N- to C-terminus: Xylose isomerase (440 aa).

Residues His100 and Asp103 contribute to the active site. Residues Glu231, Glu267, His270, Asp295, Asp306, Asp308, and Asp338 each coordinate Mg(2+).

It belongs to the xylose isomerase family. In terms of assembly, homotetramer. It depends on Mg(2+) as a cofactor.

It is found in the cytoplasm. The catalysed reaction is alpha-D-xylose = alpha-D-xylulofuranose. In Burkholderia ambifaria (strain MC40-6), this protein is Xylose isomerase.